Here is a 184-residue protein sequence, read N- to C-terminus: NADH-quinone oxidoreductase subunit B (184 aa).

[4Fe-4S] cluster contacts are provided by C63, C64, C128, and C158.

Belongs to the complex I 20 kDa subunit family. In terms of assembly, NDH-1 is composed of 14 different subunits. Subunits NuoB, C, D, E, F, and G constitute the peripheral sector of the complex. The cofactor is [4Fe-4S] cluster.

It localises to the cell inner membrane. The catalysed reaction is a quinone + NADH + 5 H(+)(in) = a quinol + NAD(+) + 4 H(+)(out). NDH-1 shuttles electrons from NADH, via FMN and iron-sulfur (Fe-S) centers, to quinones in the respiratory chain. The immediate electron acceptor for the enzyme in this species is believed to be ubiquinone. Couples the redox reaction to proton translocation (for every two electrons transferred, four hydrogen ions are translocated across the cytoplasmic membrane), and thus conserves the redox energy in a proton gradient. This is NADH-quinone oxidoreductase subunit B from Xylella fastidiosa (strain M12).